A 160-amino-acid chain; its full sequence is SsrA-binding protein (160 aa).

This sequence belongs to the SmpB family.

It is found in the cytoplasm. In terms of biological role, required for rescue of stalled ribosomes mediated by trans-translation. Binds to transfer-messenger RNA (tmRNA), required for stable association of tmRNA with ribosomes. tmRNA and SmpB together mimic tRNA shape, replacing the anticodon stem-loop with SmpB. tmRNA is encoded by the ssrA gene; the 2 termini fold to resemble tRNA(Ala) and it encodes a 'tag peptide', a short internal open reading frame. During trans-translation Ala-aminoacylated tmRNA acts like a tRNA, entering the A-site of stalled ribosomes, displacing the stalled mRNA. The ribosome then switches to translate the ORF on the tmRNA; the nascent peptide is terminated with the 'tag peptide' encoded by the tmRNA and targeted for degradation. The ribosome is freed to recommence translation, which seems to be the essential function of trans-translation. In Citrobacter koseri (strain ATCC BAA-895 / CDC 4225-83 / SGSC4696), this protein is SsrA-binding protein.